A 277-amino-acid chain; its full sequence is Methylglyoxal reductase DkgA (277 aa).

The active-site Proton donor is the tyrosine 51. A substrate-binding site is contributed by histidine 107. 187–241 (SPLAQGGKGVFDQEIIRKLAQQYNKTPAQIVIRWHLDSGLIVIPKSVTPARIREN) contacts NADP(+).

This sequence belongs to the aldo/keto reductase family. As to quaternary structure, monomer.

Its subcellular location is the cytoplasm. It carries out the reaction hydroxyacetone + NADP(+) = methylglyoxal + NADPH + H(+). In terms of biological role, aldo-keto reductase that significantly contributes to cellular methylglyoxal detoxification by catalyzing the NADPH-dependent conversion of methylglyoxal to acetol. This Yersinia pestis protein is Methylglyoxal reductase DkgA.